The chain runs to 153 residues: 3-hydroxyacyl-[acyl-carrier-protein] dehydratase FabZ (153 aa).

H52 is a catalytic residue.

The protein belongs to the thioester dehydratase family. FabZ subfamily.

The protein resides in the cytoplasm. The catalysed reaction is a (3R)-hydroxyacyl-[ACP] = a (2E)-enoyl-[ACP] + H2O. Involved in unsaturated fatty acids biosynthesis. Catalyzes the dehydration of short chain beta-hydroxyacyl-ACPs and long chain saturated and unsaturated beta-hydroxyacyl-ACPs. This chain is 3-hydroxyacyl-[acyl-carrier-protein] dehydratase FabZ, found in Magnetococcus marinus (strain ATCC BAA-1437 / JCM 17883 / MC-1).